We begin with the raw amino-acid sequence, 92 residues long: Small ribosomal subunit protein uS19c (92 aa).

The protein belongs to the universal ribosomal protein uS19 family.

The protein resides in the plastid. It localises to the chloroplast. Its function is as follows. Protein S19 forms a complex with S13 that binds strongly to the 16S ribosomal RNA. The sequence is that of Small ribosomal subunit protein uS19c from Chlorokybus atmophyticus (Soil alga).